Consider the following 131-residue polypeptide: Transcription antitermination protein NusB (131 aa).

Belongs to the NusB family.

In terms of biological role, involved in transcription antitermination. Required for transcription of ribosomal RNA (rRNA) genes. Binds specifically to the boxA antiterminator sequence of the ribosomal RNA (rrn) operons. This is Transcription antitermination protein NusB from Bacillus pumilus (strain SAFR-032).